Reading from the N-terminus, the 107-residue chain is Urease subunit beta (107 aa).

It belongs to the urease beta subunit family. Heterotrimer of UreA (gamma), UreB (beta) and UreC (alpha) subunits. Three heterotrimers associate to form the active enzyme.

The protein localises to the cytoplasm. It catalyses the reaction urea + 2 H2O + H(+) = hydrogencarbonate + 2 NH4(+). Its pathway is nitrogen metabolism; urea degradation; CO(2) and NH(3) from urea (urease route): step 1/1. The sequence is that of Urease subunit beta from Escherichia coli.